The primary structure comprises 110 residues: Spermatid nuclear transition protein 3 (110 aa).

Residues 80-110 (RSCAREKLNQSRKRYQNMRQSQRRGQNQKRR) are disordered.

It localises to the nucleus. It is found in the chromosome. Functionally, involved in nuclear basic protein transition: histones are replaced by spermatid specific proteins which are themselves replaced by protamines in late spermatids. The sequence is that of Spermatid nuclear transition protein 3 from Ovis aries (Sheep).